The primary structure comprises 156 residues: B3 domain-containing protein At5g26805 (156 aa).

A DNA-binding region (TF-B3) is located at residues 57 to 155; the sequence is KFQLPMEKIR…MFCFSVLDGR (99 aa).

Its subcellular location is the nucleus. This Arabidopsis thaliana (Mouse-ear cress) protein is B3 domain-containing protein At5g26805.